The chain runs to 162 residues: UPF0114 protein PST_0950 (162 aa).

Transmembrane regions (helical) follow at residues 15 to 35, 53 to 73, and 136 to 156; these read LLAP…IKFF, LVLT…LVMV, and LMWY…MGYM.

It belongs to the UPF0114 family.

The protein localises to the cell membrane. The chain is UPF0114 protein PST_0950 from Stutzerimonas stutzeri (strain A1501) (Pseudomonas stutzeri).